Here is a 234-residue protein sequence, read N- to C-terminus: Adenosine 5'-phosphosulfate reductase (234 aa).

[4Fe-4S] cluster-binding residues include Cys-120, Cys-121, Cys-203, and Cys-206. Residue Cys-229 is the Nucleophile; cysteine thiosulfonate intermediate of the active site.

It belongs to the PAPS reductase family. CysH subfamily. [4Fe-4S] cluster serves as cofactor.

The protein resides in the cytoplasm. The enzyme catalyses [thioredoxin]-disulfide + sulfite + AMP + 2 H(+) = adenosine 5'-phosphosulfate + [thioredoxin]-dithiol. It participates in sulfur metabolism; hydrogen sulfide biosynthesis; sulfite from sulfate. In terms of biological role, catalyzes the formation of sulfite from adenosine 5'-phosphosulfate (APS) using thioredoxin as an electron donor. The chain is Adenosine 5'-phosphosulfate reductase from Bacillus cereus (strain ATCC 14579 / DSM 31 / CCUG 7414 / JCM 2152 / NBRC 15305 / NCIMB 9373 / NCTC 2599 / NRRL B-3711).